Consider the following 618-residue polypeptide: MNDLQLSAELALFLTKLPSEPGIYRMLDEEGTVLYVGKAANLKKRVNSYFSKQNTGVKTRALVSQIKSIEISVTRSETEALLLESNLIKALRPKYNVLLRDDKSYPYIHLSNHPDFPRVELYRSKKKPPSGNFFGPYPGVAAVRETIVTIQKIFKIRNCRDSYFKARSRPCLQYQIKRCTAPCVHYISPENYKLSVEDAIRFLQGKCQIILDELAERMKNAVSQLNFEEAAVLRDQIKNLRLIQEQQGVVQLRGDADVIAIEVRPGFACIQCVTIREGQVLNSQSFFPTVPYAVLDEELDANSLWQQTFEAFIGFYYLDTSERIPDLIITNQSITESRSLEYILSQRRGKSCKIQVNPRGVKSRWMDFAVNNLRISVAEYVSKHSTIRSRYQALRQLLALDKNIERMECFDISHTQGEATVASCVVFDTEGPRPSEYRRFNIEGITPGDDYAAMEQAVTRRFKRLIGAQLLPDVLIIDGGKGQVSIVKRVLTSLGVEDITLLGVSKGPSRKAGWEKLILVNENREFVLPEDSKALHLLQHIRDEAHRFAITAHRKKRQKTRVESTLESIEGVGAKRRQALLQRFGGLRELAKASLEEICKVQGISEQLAKRIYEHFHP.

Residues 19–97 (SEPGIYRMLD…IKALRPKYNV (79 aa)) form the GIY-YIG domain. Residues 208-243 (QIILDELAERMKNAVSQLNFEEAAVLRDQIKNLRLI) form the UVR domain.

This sequence belongs to the UvrC family. Interacts with UvrB in an incision complex.

It localises to the cytoplasm. The UvrABC repair system catalyzes the recognition and processing of DNA lesions. UvrC both incises the 5' and 3' sides of the lesion. The N-terminal half is responsible for the 3' incision and the C-terminal half is responsible for the 5' incision. This chain is UvrABC system protein C, found in Legionella pneumophila (strain Lens).